Reading from the N-terminus, the 310-residue chain is Putative S-adenosyl-L-methionine-dependent methyltransferase ML2640 (310 aa).

Residues aspartate 132 and 161-162 contribute to the S-adenosyl-L-methionine site; that span reads DL.

This sequence belongs to the UPF0677 family.

In terms of biological role, exhibits S-adenosyl-L-methionine-dependent methyltransferase activity. The polypeptide is Putative S-adenosyl-L-methionine-dependent methyltransferase ML2640 (Mycobacterium leprae (strain TN)).